Consider the following 312-residue polypeptide: Calcium-independent mitochondrial carrier protein SCaMC-3L (312 aa).

Solcar repeat units lie at residues 27–113 (GTLW…SRNF), 121–206 (PSFQ…LRCL), and 217–304 (PSGL…MKKT). The next 6 helical transmembrane spans lie at 33-50 (LLSGAMAGAVSRTGTAPL), 88-107 (GNGINVLKIAPEYAIKFSVF), 131-144 (SLAVAISQTLINPM), 182-200 (YLPNMLGIIPYACTDLAVY), 219-243 (GLVSLSSVTLSTTCGQMASYPLTLV), and 279-298 (GMTPTLLKVLPAGGISYLVY).

The protein belongs to the mitochondrial carrier (TC 2.A.29) family. Mainly expressed in testis and at lesser levels in brain.

Its subcellular location is the mitochondrion inner membrane. It catalyses the reaction Mg(2+)(out) + phosphate(in) + ATP(out) = Mg(2+)(in) + phosphate(out) + ATP(in). It carries out the reaction ADP(out) + phosphate(in) + H(+)(out) = ADP(in) + phosphate(out) + H(+)(in). Its function is as follows. Calcium-independent ATP-Mg/Pi exchanger that catalyzes the electroneutral exchange of Mg-ATP or free ADP against an hydrogenphosphate and participates in the net transport of adenine nucleotides across the mitochondria inner membrane. This is Calcium-independent mitochondrial carrier protein SCaMC-3L from Rattus norvegicus (Rat).